Here is a 76-residue protein sequence, read N- to C-terminus: Conotoxin Cl6.4 (76 aa).

The signal sequence occupies residues 1-19 (MTLTFLLVVALCMLTTCHT). A propeptide spanning residues 20 to 47 (ENYRDSQKVSPVRSIGKTQFARSLRLSE) is cleaved from the precursor. 3 cysteine pairs are disulfide-bonded: Cys50–Cys66, Cys57–Cys70, and Cys65–Cys75.

Expressed by the venom duct.

The protein localises to the secreted. The sequence is that of Conotoxin Cl6.4 from Californiconus californicus (California cone).